A 23-amino-acid chain; its full sequence is Hemocyanin subunit 4 (23 aa).

Belongs to the tyrosinase family. Hemocyanin subfamily. Hemolymph.

It is found in the secreted. The protein resides in the extracellular space. Functionally, hemocyanins are copper-containing oxygen carriers occurring freely dissolved in the hemolymph of many mollusks and arthropods. The protein is Hemocyanin subunit 4 of Carcinus maenas (Common shore crab).